Here is a 66-residue protein sequence, read N- to C-terminus: ATP synthase F(0) complex subunit 8 (66 aa).

The chain crosses the membrane as a helical span at residues 8-24 (IWLLAVVIVLTTLMIFL). K54 bears the N6-acetyllysine; alternate mark. K54 is subject to N6-succinyllysine; alternate. An N6-acetyllysine modification is found at K57.

This sequence belongs to the ATPase protein 8 family. Component of the ATP synthase complex composed at least of ATP5F1A/subunit alpha, ATP5F1B/subunit beta, ATP5MC1/subunit c (homooctomer), MT-ATP6/subunit a, MT-ATP8/subunit 8, ATP5ME/subunit e, ATP5MF/subunit f, ATP5MG/subunit g, ATP5MK/subunit k, ATP5MJ/subunit j, ATP5F1C/subunit gamma, ATP5F1D/subunit delta, ATP5F1E/subunit epsilon, ATP5PF/subunit F6, ATP5PB/subunit b, ATP5PD/subunit d, ATP5PO/subunit OSCP. ATP synthase complex consists of a soluble F(1) head domain (subunits alpha(3) and beta(3)) - the catalytic core - and a membrane F(0) domain - the membrane proton channel (subunits c, a, 8, e, f, g, k and j). These two domains are linked by a central stalk (subunits gamma, delta, and epsilon) rotating inside the F1 region and a stationary peripheral stalk (subunits F6, b, d, and OSCP). Interacts with PRICKLE3.

Its subcellular location is the mitochondrion membrane. Its function is as follows. Subunit 8, of the mitochondrial membrane ATP synthase complex (F(1)F(0) ATP synthase or Complex V) that produces ATP from ADP in the presence of a proton gradient across the membrane which is generated by electron transport complexes of the respiratory chain. ATP synthase complex consist of a soluble F(1) head domain - the catalytic core - and a membrane F(1) domain - the membrane proton channel. These two domains are linked by a central stalk rotating inside the F(1) region and a stationary peripheral stalk. During catalysis, ATP synthesis in the catalytic domain of F(1) is coupled via a rotary mechanism of the central stalk subunits to proton translocation. In vivo, can only synthesize ATP although its ATP hydrolase activity can be activated artificially in vitro. Part of the complex F(0) domain. This is ATP synthase F(0) complex subunit 8 from Loxodonta africana (African elephant).